The following is a 232-amino-acid chain: Large ribosomal subunit protein uL1 (232 aa).

It belongs to the universal ribosomal protein uL1 family. Part of the 50S ribosomal subunit.

Binds directly to 23S rRNA. The L1 stalk is quite mobile in the ribosome, and is involved in E site tRNA release. Functionally, protein L1 is also a translational repressor protein, it controls the translation of the L11 operon by binding to its mRNA. This is Large ribosomal subunit protein uL1 from Sinorhizobium fredii (strain NBRC 101917 / NGR234).